The chain runs to 298 residues: Thymidylate synthase (298 aa).

Residues arginine 25 and 159–160 (RR) contribute to the dUMP site. The Nucleophile role is filled by cysteine 179. Residues 200–203 (RSCD), asparagine 211, and 241–243 (HLY) each bind dUMP. Position 203 (aspartate 203) interacts with (6R)-5,10-methylene-5,6,7,8-tetrahydrofolate. Alanine 297 is a (6R)-5,10-methylene-5,6,7,8-tetrahydrofolate binding site.

The protein belongs to the thymidylate synthase family. Bacterial-type ThyA subfamily. Homodimer.

It is found in the cytoplasm. It carries out the reaction dUMP + (6R)-5,10-methylene-5,6,7,8-tetrahydrofolate = 7,8-dihydrofolate + dTMP. It participates in pyrimidine metabolism; dTTP biosynthesis. In terms of biological role, catalyzes the reductive methylation of 2'-deoxyuridine-5'-monophosphate (dUMP) to 2'-deoxythymidine-5'-monophosphate (dTMP) while utilizing 5,10-methylenetetrahydrofolate (mTHF) as the methyl donor and reductant in the reaction, yielding dihydrofolate (DHF) as a by-product. This enzymatic reaction provides an intracellular de novo source of dTMP, an essential precursor for DNA biosynthesis. The sequence is that of Thymidylate synthase from Rhodopseudomonas palustris (strain BisA53).